A 1038-amino-acid polypeptide reads, in one-letter code: Elongation factor 3 (1038 aa).

6 HEAT repeats span residues 93–131 (EAYL…SANK), 133–170 (STIR…VAPY), 174–211 (RCLP…VVGN), 213–249 (DIEP…TVEA), 255–287 (MEPL…LMDD), and 292–331 (QLFI…AGGS). Residue glutamate 406 participates in ADP binding. ABC transporter domains follow at residues 426–654 (IFIE…YYEL) and 680–995 (IRLT…EEVT). ADP is bound by residues asparagine 716, glutamate 924, asparagine 927, and histidine 953. Positions 1012 to 1038 (RKEKKAKDKARKEAEARGEYYSDSDEE) are disordered. The segment covering 1021 to 1031 (ARKEAEARGEY) has biased composition (basic and acidic residues).

It belongs to the ABC transporter superfamily. ABCF family. EF3 subfamily. Monomer.

It localises to the cytoplasm. It catalyses the reaction ATP + H2O = ADP + phosphate + H(+). The protein operates within protein biosynthesis; polypeptide chain elongation. In terms of biological role, ribosome-dependent ATPase that functions in cytoplasmic translation elongation. Required for the ATP-dependent release of deacylated tRNA from the ribosomal E-site during protein biosynthesis. Stimulates the eEF1A-dependent binding of aminoacyl-tRNA to the ribosomal A-site, which has reduced affinity for tRNA as long as the E-site is occupied. Assists translation termination by stimulating the release of nascent protein from the ribosome by release factors. The polypeptide is Elongation factor 3 (Phytophthora infestans (strain T30-4) (Potato late blight agent)).